Here is a 246-residue protein sequence, read N- to C-terminus: MKKPDIQQLKDIVNNSNQIVFFTGAGVSVASGIPDFRSMGGLYDEISKDGQSPEYLLSIDHLHDNKESFINFYHERLLIADKKPNIVHQWIAQLENQQKSLGVITQNIDGLHEDAGSHNIDELHGTLNRFYCINCYEEYSKSYFMTHHLKYCEKCGNVIRPDIVLYGEMLNQKTVFKALDKIQHADTLIVLGSSLVVQPAAGFVSEFKGDNLVIINRDATPYDHTASLVIHDDMTSVIEEIVNSNS.

The Deacetylase sirtuin-type domain maps to 1 to 246 (MKKPDIQQLK…VIEEIVNSNS (246 aa)). Ala-25, Phe-36, Arg-37, Gln-106, Ile-108, Asp-109, and His-124 together coordinate NAD(+). Phe-36 contacts nicotinamide. Nicotinamide is bound by residues Ile-108 and Asp-109. His-124 (proton acceptor) is an active-site residue. The Zn(2+) site is built by Cys-132, Cys-135, Cys-152, and Cys-155. Residues Ser-193, Ser-194, Asn-216, and Asp-233 each contribute to the NAD(+) site.

The protein belongs to the sirtuin family. Class U subfamily. The cofactor is Zn(2+).

Its subcellular location is the cytoplasm. It carries out the reaction N(6)-acetyl-L-lysyl-[protein] + NAD(+) + H2O = 2''-O-acetyl-ADP-D-ribose + nicotinamide + L-lysyl-[protein]. NAD-dependent protein deacetylase which modulates the activities of several enzymes which are inactive in their acetylated form. The chain is NAD-dependent protein deacetylase from Staphylococcus epidermidis (strain ATCC 35984 / DSM 28319 / BCRC 17069 / CCUG 31568 / BM 3577 / RP62A).